Here is an 83-residue protein sequence, read N- to C-terminus: Protein MATERNALLY EXPRESSED GENE 3 (83 aa).

Residues 1–22 form the signal peptide; it reads MQWLAFVAPRWRCVCDQELSAQ. Cysteines 60 and 82 form a disulfide.

This sequence belongs to the MEG family. As to expression, expressed in endosperm, anther and pollen.

The polypeptide is Protein MATERNALLY EXPRESSED GENE 3 (MEG3) (Zea mays (Maize)).